Consider the following 65-residue polypeptide: Hirudin-3B (65 aa).

Residues 1–3 (VVY) form an interaction with thrombin active site region. 3 disulfides stabilise this stretch: Cys-6-Cys-14, Cys-16-Cys-28, and Cys-22-Cys-39. Residues 40-65 (VTGEGTPKPQSHNDGDFEEIPEEYLQ) are disordered. Thr-45 is a glycosylation site (O-linked (GalNAc...) threonine). Positions 55 to 65 (DFEEIPEEYLQ) are interaction with fibrinogen-binding exosite of thrombin. Over residues 55-65 (DFEEIPEEYLQ) the composition is skewed to acidic residues. Tyr-63 carries the sulfotyrosine modification.

The protein belongs to the protease inhibitor I14 (hirudin) family.

Its subcellular location is the secreted. Hirudin is a potent thrombin-specific protease inhibitor. It forms a stable non-covalent complex with alpha-thrombin, thereby abolishing its ability to cleave fibrinogen. The polypeptide is Hirudin-3B (Hirudo medicinalis (Medicinal leech)).